The sequence spans 217 residues: Large ribosomal subunit protein uL1 (217 aa).

This sequence belongs to the universal ribosomal protein uL1 family.

In Candida glabrata (strain ATCC 2001 / BCRC 20586 / JCM 3761 / NBRC 0622 / NRRL Y-65 / CBS 138) (Yeast), this protein is Large ribosomal subunit protein uL1 (RPL10A).